A 317-amino-acid polypeptide reads, in one-letter code: Lipoyl synthase (317 aa).

The tract at residues 1 to 22 (MVTVVNTLNRPRHPEKQNRPET) is disordered. Basic and acidic residues predominate over residues 12-22 (RHPEKQNRPET). 7 residues coordinate [4Fe-4S] cluster: Cys-57, Cys-62, Cys-68, Cys-83, Cys-87, Cys-90, and Ser-296. The 217-residue stretch at 69 to 285 (WEKKHATFMI…ETVAYAKGFL (217 aa)) folds into the Radical SAM core domain.

The protein belongs to the radical SAM superfamily. Lipoyl synthase family. It depends on [4Fe-4S] cluster as a cofactor.

Its subcellular location is the cytoplasm. It carries out the reaction [[Fe-S] cluster scaffold protein carrying a second [4Fe-4S](2+) cluster] + N(6)-octanoyl-L-lysyl-[protein] + 2 oxidized [2Fe-2S]-[ferredoxin] + 2 S-adenosyl-L-methionine + 4 H(+) = [[Fe-S] cluster scaffold protein] + N(6)-[(R)-dihydrolipoyl]-L-lysyl-[protein] + 4 Fe(3+) + 2 hydrogen sulfide + 2 5'-deoxyadenosine + 2 L-methionine + 2 reduced [2Fe-2S]-[ferredoxin]. It participates in protein modification; protein lipoylation via endogenous pathway; protein N(6)-(lipoyl)lysine from octanoyl-[acyl-carrier-protein]: step 2/2. Catalyzes the radical-mediated insertion of two sulfur atoms into the C-6 and C-8 positions of the octanoyl moiety bound to the lipoyl domains of lipoate-dependent enzymes, thereby converting the octanoylated domains into lipoylated derivatives. In Azorhizobium caulinodans (strain ATCC 43989 / DSM 5975 / JCM 20966 / LMG 6465 / NBRC 14845 / NCIMB 13405 / ORS 571), this protein is Lipoyl synthase.